The chain runs to 302 residues: MKKDLLSIYDLEAGDFKAIFEKARHLKSVHEQGVAYTPLKGKTLGMIFDKSSTRTRISFEVGMYQLGGLALFLSNRDTQLGRGETVADSARIMSRYLNGIMIRTFSHLIIEEFAAHATIPVINGLTDLLHPCQILSDLFTIIEKKGSYERLKIVYVGDGNNIANSWINAAARLPFHLALSCPEGYDPDSGILDRGVKEAKEGVSLMRDPYEAVRNADVVYTDVWASMGQEAEQEARARVFRPYQINEALLSPAKKDAIVMHCLPAHRGEEITAAVLDGPRSVIIDQAENRLHVQKAILEILI.

Carbamoyl phosphate contacts are provided by residues 52-55 (STRT), Gln-79, Arg-103, and 130-133 (HPCQ). L-ornithine-binding positions include Asn-161, Asp-222, and 226-227 (SM). Carbamoyl phosphate-binding positions include 262 to 263 (CL) and Arg-290.

It belongs to the aspartate/ornithine carbamoyltransferase superfamily. OTCase family.

The protein localises to the cytoplasm. The enzyme catalyses carbamoyl phosphate + L-ornithine = L-citrulline + phosphate + H(+). The protein operates within amino-acid biosynthesis; L-arginine biosynthesis; L-arginine from L-ornithine and carbamoyl phosphate: step 1/3. Its function is as follows. Reversibly catalyzes the transfer of the carbamoyl group from carbamoyl phosphate (CP) to the N(epsilon) atom of ornithine (ORN) to produce L-citrulline. This is Ornithine carbamoyltransferase from Syntrophus aciditrophicus (strain SB).